We begin with the raw amino-acid sequence, 106 residues long: Terpredoxin (106 aa).

The 105-residue stretch at 2–106 (PRVVFIDEQS…GLIVRVPLPA (105 aa)) folds into the 2Fe-2S ferredoxin-type domain. [2Fe-2S] cluster is bound by residues Cys-40, Cys-46, Cys-49, and Cys-87.

Belongs to the adrenodoxin/putidaredoxin family. [2Fe-2S] cluster is required as a cofactor.

The oxidation of alpha-terpineol by cytochrome p450-TERP requires the participation of a flavoprotein, terpredoxin reductase, and an iron-sulfur protein, terpredoxin, to mediate the transfer of electrons from NADH to P450 for oxygen activation. This is Terpredoxin (terPB) from Pseudomonas sp.